A 379-amino-acid chain; its full sequence is Probable RNA 3'-terminal phosphate cyclase-like protein (379 aa).

This sequence belongs to the RNA 3'-terminal cyclase family. Type 2 subfamily. In terms of assembly, part of the small subunit (SSU) processome, composed of more than 70 proteins and the RNA chaperone small nucleolar RNA (snoRNA) U3.

The protein localises to the nucleus. It is found in the nucleolus. In terms of biological role, part of the small subunit (SSU) processome, first precursor of the small eukaryotic ribosomal subunit. During the assembly of the SSU processome in the nucleolus, many ribosome biogenesis factors, an RNA chaperone and ribosomal proteins associate with the nascent pre-rRNA and work in concert to generate RNA folding, modifications, rearrangements and cleavage as well as targeted degradation of pre-ribosomal RNA by the RNA exosome. Does not have cyclase activity. The protein is Probable RNA 3'-terminal phosphate cyclase-like protein of Caenorhabditis elegans.